The primary structure comprises 517 residues: Ammonium transporter 3 (517 aa).

Residues 1 to 32 (MLNEPNALLRRDANSTIATVTELFPNEYSNAD) are Extracellular-facing. The helical transmembrane segment at 33–53 (IAYVLLSTVVVFTVTPGIALY) threads the bilayer. Topologically, residues 54–69 (YAGMVRKNSALSILTQ) are cytoplasmic. The helical transmembrane segment at 70 to 90 (SFLVTAVVFIQWYLFGYSLAC) threads the bilayer. Over 91-118 (SSGSSFYGTLWQGGMNHLWLEPYIPGST) the chain is Extracellular. Residues 119–139 (IPAIVYFPFGGLFAVATAQLF) form a helical membrane-spanning segment. At 140-148 (AGAMAERGR) the chain is on the cytoplasmic side. A helical membrane pass occupies residues 149 to 169 (LIPSLVISFLYITLVYCPQAY). The Extracellular portion of the chain corresponds to 170–180 (WTWAPNGWLYT). A helical membrane pass occupies residues 181–201 (LGALDFAGGGPVHISSGFAAL). Residues 202–272 (AYSLCLGRRI…AHNPPHDAGM (71 aa)) are Cytoplasmic-facing. A helical membrane pass occupies residues 273–293 (VYIGVVLIWFAWLCFNSGTLL). Topologically, residues 294–299 (TVNIRT) are extracellular. Residues 300-320 (AYIMTNTLISSSFGALTWAII) form a helical membrane-spanning segment. Residues 321 to 327 (DYIRYRK) are Cytoplasmic-facing. Residues 328 to 348 (FSTIGICEGAIAGLVGITPAC) form a helical membrane-spanning segment. Gly349 is a topological domain (extracellular). The chain crosses the membrane as a helical span at residues 350 to 370 (FVFPWGAAAGGIVPALVCNFL). Over 371 to 384 (HDLNEWIGVDETLR) the chain is Cytoplasmic. Residues 385-405 (VFNLHGIGGIVGSIVLGVVAH) form a helical membrane-spanning segment. The Extracellular portion of the chain corresponds to 406-432 (PDVAASDGATVIDGGWAVHHWKQMGYQ). The chain crosses the membrane as a helical span at residues 433–453 (FAGFTSVAAWSFVITAIICLL). The Cytoplasmic segment spans residues 454–517 (VDLVPGLHIR…NIKQEKQDEF (64 aa)).

It belongs to the ammonia transporter channel (TC 1.A.11.2) family.

Its subcellular location is the membrane. Its function is as follows. Transporter for ammonium to use as a nitrogen source. The sequence is that of Ammonium transporter 3 (amt3) from Schizosaccharomyces pombe (strain 972 / ATCC 24843) (Fission yeast).